We begin with the raw amino-acid sequence, 545 residues long: Glucose-6-phosphate isomerase (545 aa).

Catalysis depends on Glu-351, which acts as the Proton donor. Active-site residues include His-382 and Lys-510.

It belongs to the GPI family.

Its subcellular location is the cytoplasm. The enzyme catalyses alpha-D-glucose 6-phosphate = beta-D-fructose 6-phosphate. It functions in the pathway carbohydrate biosynthesis; gluconeogenesis. Its pathway is carbohydrate degradation; glycolysis; D-glyceraldehyde 3-phosphate and glycerone phosphate from D-glucose: step 2/4. Functionally, catalyzes the reversible isomerization of glucose-6-phosphate to fructose-6-phosphate. The polypeptide is Glucose-6-phosphate isomerase (Helicobacter pylori (strain G27)).